The following is a 208-amino-acid chain: Outer-membrane lipoprotein carrier protein (208 aa).

A signal peptide spans 1–22 (MKNLLCAVMLTSPLLYSTAVFA).

Belongs to the LolA family. As to quaternary structure, monomer.

The protein localises to the periplasm. Participates in the translocation of lipoproteins from the inner membrane to the outer membrane. Only forms a complex with a lipoprotein if the residue after the N-terminal Cys is not an aspartate (The Asp acts as a targeting signal to indicate that the lipoprotein should stay in the inner membrane). The sequence is that of Outer-membrane lipoprotein carrier protein from Shewanella putrefaciens (strain CN-32 / ATCC BAA-453).